Reading from the N-terminus, the 704-residue chain is Polyribonucleotide nucleotidyltransferase (704 aa).

Aspartate 485 and aspartate 491 together coordinate Mg(2+). Positions 552-611 (PKTETIQIDPDKIRSVIGAGGKVINKIIQDTGVKIDIKEDGSVFVSSSDHAGVKEAIKII) constitute a KH domain. Positions 621–689 (GEIYLGKVTK…SQGRINLSRK (69 aa)) constitute an S1 motif domain.

This sequence belongs to the polyribonucleotide nucleotidyltransferase family. Mg(2+) is required as a cofactor.

Its subcellular location is the cytoplasm. It catalyses the reaction RNA(n+1) + phosphate = RNA(n) + a ribonucleoside 5'-diphosphate. Involved in mRNA degradation. Catalyzes the phosphorolysis of single-stranded polyribonucleotides processively in the 3'- to 5'-direction. The chain is Polyribonucleotide nucleotidyltransferase from Clostridium botulinum (strain Eklund 17B / Type B).